The sequence spans 386 residues: Protein salvador homolog 1 (386 aa).

Residues serine 95 and serine 137 each carry the phosphoserine modification. WW domains are found at residues 200–233 and 235–268; these read LPLP…HPLE and EGLP…HPCA. Position 211 is a phosphothreonine (threonine 211). Positions 322-369 constitute an SARAH domain; it reads ILKWELFQLADLDTYQGMLKLLFMKELEQIVKLYEAYRQALLTELENR. Residues 345–374 adopt a coiled-coil conformation; that stretch reads MKELEQIVKLYEAYRQALLTELENRKQRQQ.

As to quaternary structure, homodimer. Stabilized through interaction with STK3/MST2 or STK4/MST1. Interacts (via SARAH domain) with isoform 1 of NEK2. Interacts with ESR1 only in the presence of STK3/MST2. Interacts with WTIP and AJUBA. Post-translationally, phosphorylated by STK3/MST2 and STK4/MST1. Phosphorylation is not required for SAV1 stability and may increase the number of protein binding sites on the scaffold molecule. As to expression, ubiquitously expressed in adult tissues with the highest level found in testis.

It localises to the nucleus. It is found in the cytoplasm. Regulator of STK3/MST2 and STK4/MST1 in the Hippo signaling pathway which plays a pivotal role in organ size control and tumor suppression by restricting proliferation and promoting apoptosis. The core of this pathway is composed of a kinase cascade wherein STK3/MST2 and STK4/MST1, in complex with its regulatory protein SAV1, phosphorylates and activates LATS1/2 in complex with its regulatory protein MOB1, which in turn phosphorylates and inactivates YAP1 oncoprotein and WWTR1/TAZ. Phosphorylation of YAP1 by LATS1/2 inhibits its translocation into the nucleus to regulate cellular genes important for cell proliferation, cell death, and cell migration. SAV1 is required for STK3/MST2 and STK4/MST1 activation and promotes cell-cycle exit and terminal differentiation in developing epithelial tissues. Plays a role in centrosome disjunction by regulating the localization of NEK2 to centrosomes, and its ability to phosphorylate CROCC and CEP250. In conjunction with STK3/MST2, activates the transcriptional activity of ESR1 through the modulation of its phosphorylation. The sequence is that of Protein salvador homolog 1 (Sav1) from Mus musculus (Mouse).